The chain runs to 207 residues: Ribonuclease HII (207 aa).

The region spanning 12 to 201 (DLVAGVDEVG…VRAAWEAREG (190 aa)) is the RNase H type-2 domain. A divalent metal cation-binding residues include Asp18, Glu19, and Asp110.

It belongs to the RNase HII family. Requires Mn(2+) as cofactor. Mg(2+) is required as a cofactor.

The protein localises to the cytoplasm. The catalysed reaction is Endonucleolytic cleavage to 5'-phosphomonoester.. In terms of biological role, endonuclease that specifically degrades the RNA of RNA-DNA hybrids. The chain is Ribonuclease HII from Pseudomonas putida (strain GB-1).